The following is a 410-amino-acid chain: Ribonucleoside-diphosphate reductase small chain (410 aa).

Residues 1 to 20 show a composition bias toward polar residues; sequence MSVQTSPSKQVTSGIQNLNM. 2 disordered regions span residues 1-43 and 55-78; these read MSVQ…DEDL and NANKKAAEAKKMAPTLKPEEANEP. 2 stretches are compositionally biased toward basic and acidic residues: residues 23 to 43 and 55 to 65; these read PAKKLDFGATDKENKPFDEDL and NANKKAAEAKK. 3 residues coordinate Fe cation: Asp146, Glu177, and His180. Residue Tyr184 is part of the active site. Positions 240, 274, and 277 each coordinate Fe cation.

This sequence belongs to the ribonucleoside diphosphate reductase small chain family. In terms of assembly, heterodimer of a large and a small subunit. It depends on Fe cation as a cofactor.

The enzyme catalyses a 2'-deoxyribonucleoside 5'-diphosphate + [thioredoxin]-disulfide + H2O = a ribonucleoside 5'-diphosphate + [thioredoxin]-dithiol. Provides the precursors necessary for DNA synthesis. Catalyzes the biosynthesis of deoxyribonucleotides from the corresponding ribonucleotides. This Neurospora crassa (strain ATCC 24698 / 74-OR23-1A / CBS 708.71 / DSM 1257 / FGSC 987) protein is Ribonucleoside-diphosphate reductase small chain (rnr-2).